The following is a 296-amino-acid chain: GTPase Era (296 aa).

The Era-type G domain maps to 7–174 (KCSMNAIVGT…INYLCEISPS (168 aa)). The G1 stretch occupies residues 15 to 22 (GTTNAGKS). 15–22 (GTTNAGKS) serves as a coordination point for GTP. The tract at residues 41–45 (QTTRV) is G2. Residues 62–65 (DTPG) form a G3 region. GTP-binding positions include 62-66 (DTPGI) and 124-127 (NKID). The tract at residues 124–127 (NKID) is G4. Positions 153-155 (ISA) are G5. The 78-residue stretch at 205 to 282 (LHHELPYSLS…HLFLFVKVRE (78 aa)) folds into the KH type-2 domain.

The protein belongs to the TRAFAC class TrmE-Era-EngA-EngB-Septin-like GTPase superfamily. Era GTPase family. As to quaternary structure, monomer.

The protein resides in the cytoplasm. It localises to the cell inner membrane. Functionally, an essential GTPase that binds both GDP and GTP, with rapid nucleotide exchange. Plays a role in 16S rRNA processing and 30S ribosomal subunit biogenesis and possibly also in cell cycle regulation and energy metabolism. This is GTPase Era from Ehrlichia canis (strain Jake).